Consider the following 99-residue polypeptide: Cytochrome c2 iso-1 (99 aa).

Positions 10, 13, 14, and 75 each coordinate heme c.

Belongs to the cytochrome c family. Binds 1 heme c group covalently per subunit.

Functionally, cytochrome c2 is found mainly in purple, non-sulfur, photosynthetic bacteria where it functions as the electron donor to the oxidized bacteriochlorophyll in the photophosphorylation pathway. However, it may also have a role in the respiratory chain and is found in some non-photosynthetic bacteria. The polypeptide is Cytochrome c2 iso-1 (Magnetospirillum fulvum (Rhodospirillum fulvum)).